The chain runs to 149 residues: Transcriptional repressor NrdR (149 aa).

Residues 3 to 34 (CPYCSYEESKVVDSRSAEDYNAIRRRRECLRC) fold into a zinc finger. One can recognise an ATP-cone domain in the interval 49 to 139 (ILVIKKDLSR…VYRQFKDINT (91 aa)).

This sequence belongs to the NrdR family. Zn(2+) serves as cofactor.

Negatively regulates transcription of bacterial ribonucleotide reductase nrd genes and operons by binding to NrdR-boxes. In Clostridium perfringens (strain ATCC 13124 / DSM 756 / JCM 1290 / NCIMB 6125 / NCTC 8237 / Type A), this protein is Transcriptional repressor NrdR.